A 123-amino-acid chain; its full sequence is Small ribosomal subunit protein uS12 (123 aa).

Residues 1 to 32 (MPTIQQLVRKGRKTKVSKNKTPALKGSPQRRG) form a disordered region. Basic residues predominate over residues 9–18 (RKGRKTKVSK). Asp-89 is subject to 3-methylthioaspartic acid.

Belongs to the universal ribosomal protein uS12 family. Part of the 30S ribosomal subunit. Contacts proteins S8 and S17. May interact with IF1 in the 30S initiation complex.

With S4 and S5 plays an important role in translational accuracy. Functionally, interacts with and stabilizes bases of the 16S rRNA that are involved in tRNA selection in the A site and with the mRNA backbone. Located at the interface of the 30S and 50S subunits, it traverses the body of the 30S subunit contacting proteins on the other side and probably holding the rRNA structure together. The combined cluster of proteins S8, S12 and S17 appears to hold together the shoulder and platform of the 30S subunit. This Thermobifida fusca (strain YX) protein is Small ribosomal subunit protein uS12.